Consider the following 202-residue polypeptide: Small ribosomal subunit protein uS4 (202 aa).

Positions 1 to 13 (MSRYRGPRLRITR) are enriched in basic residues. The segment at 1-43 (MSRYRGPRLRITRRLGDLPGLTRKAAKRSHPPGQHGQARRKRS) is disordered. The S4 RNA-binding domain occupies 90–152 (NRLDNVCFRL…KGSKKLAEAN (63 aa)).

The protein belongs to the universal ribosomal protein uS4 family. As to quaternary structure, part of the 30S ribosomal subunit. Contacts protein S5. The interaction surface between S4 and S5 is involved in control of translational fidelity.

Functionally, one of the primary rRNA binding proteins, it binds directly to 16S rRNA where it nucleates assembly of the body of the 30S subunit. With S5 and S12 plays an important role in translational accuracy. This Prochlorococcus marinus (strain MIT 9303) protein is Small ribosomal subunit protein uS4.